The following is a 130-amino-acid chain: Small ribosomal subunit protein uS8 (130 aa).

It belongs to the universal ribosomal protein uS8 family. As to quaternary structure, part of the 30S ribosomal subunit.

Its function is as follows. One of the primary rRNA binding proteins, it binds directly to 16S rRNA central domain where it helps coordinate assembly of the platform of the 30S subunit. This Haloquadratum walsbyi (strain DSM 16790 / HBSQ001) protein is Small ribosomal subunit protein uS8.